Here is a 380-residue protein sequence, read N- to C-terminus: Chorismate synthase (380 aa).

R47 contacts NADP(+). Residues 124 to 126 (RSS), G288, 303 to 307 (KPTST), and R329 each bind FMN.

This sequence belongs to the chorismate synthase family. In terms of assembly, homotetramer. FMNH2 serves as cofactor.

It carries out the reaction 5-O-(1-carboxyvinyl)-3-phosphoshikimate = chorismate + phosphate. Its pathway is metabolic intermediate biosynthesis; chorismate biosynthesis; chorismate from D-erythrose 4-phosphate and phosphoenolpyruvate: step 7/7. In terms of biological role, catalyzes the anti-1,4-elimination of the C-3 phosphate and the C-6 proR hydrogen from 5-enolpyruvylshikimate-3-phosphate (EPSP) to yield chorismate, which is the branch point compound that serves as the starting substrate for the three terminal pathways of aromatic amino acid biosynthesis. This reaction introduces a second double bond into the aromatic ring system. The protein is Chorismate synthase of Leptospira borgpetersenii serovar Hardjo-bovis (strain JB197).